The following is a 124-amino-acid chain: MKVAVVLLVSLLAVTYALPEKRIFFGGIVDKVKDTFTKIFNKAKETFDKITDGFDVDFDEVVDKLIAQIHSTPTKAACKAACKKGAKLILKAAAPLASQVCGPACNAALAKLEKIADDINDDDD.

The first 17 residues, 1–17, serve as a signal peptide directing secretion; that stretch reads MKVAVVLLVSLLAVTYA. Residues 18–74 constitute a propeptide that is removed on maturation; sequence LPEKRIFFGGIVDKVKDTFTKIFNKAKETFDKITDGFDVDFDEVVDKLIAQIHSTPT.

Contains 2 disulfide bond. As to expression, expressed by the venom duct.

The protein localises to the secreted. In Californiconus californicus (California cone), this protein is Conotoxin Cl14.12.